An 882-amino-acid chain; its full sequence is Bifunctional heparan sulfate N-deacetylase/N-sulfotransferase 1 (882 aa).

Over 1 to 17 (MPALACLRRLCRHLSPQ) the chain is Cytoplasmic. The interval 1–169 (MPALACLRRL…VAYGVGIIGF (169 aa)) is sufficient for localization to Golgi membrane. The helical; Signal-anchor for type II membrane protein transmembrane segment at 18 to 38 (AVLFLLFVFCLFSVFVSAYYL) threads the bilayer. The Lumenal portion of the chain corresponds to 39–882 (YGWNRGLEPS…WLREDLQNTR (844 aa)). The heparan sulfate N-deacetylase 1 stretch occupies residues 40 to 598 (GWNRGLEPSA…KRHKDIWSKE (559 aa)). N-linked (GlcNAc...) asparagine glycosylation is found at asparagine 231, asparagine 351, and asparagine 401. The segment at 599 to 882 (KTCDRFPKLL…WLREDLQNTR (284 aa)) is heparan sulfate N-sulfotransferase 1. The For sulfotransferase activity role is filled by lysine 614. 614-618 (KTGTT) lines the adenosine 3',5'-bisphosphate pocket. N-linked (GlcNAc...) asparagine glycosylation is present at asparagine 667. The adenosine 3',5'-bisphosphate site is built by serine 712 and tryptophan 817. A disulfide bond links cysteine 818 and cysteine 828. Position 833-837 (833-837 (KGRKY)) interacts with adenosine 3',5'-bisphosphate.

The protein belongs to the sulfotransferase 1 family. NDST subfamily. As to quaternary structure, monomer. Interacts with heparan sulfate co-polymerase subunits EXT1 and EXT2. As to expression, widely expressed in adult and throughout development.

The protein localises to the golgi apparatus membrane. Its subcellular location is the golgi apparatus. It localises to the trans-Golgi network membrane. The protein resides in the cis-Golgi network membrane. It carries out the reaction N-acetyl-alpha-D-glucosaminyl-[heparan sulfate](n) + H2O = alpha-D-glucosaminyl-[heparan sulfate](n) + acetate. The catalysed reaction is alpha-D-glucosaminyl-[heparan sulfate](n) + 3'-phosphoadenylyl sulfate = N-sulfo-alpha-D-glucosaminyl-[heparan sulfate](n) + adenosine 3',5'-bisphosphate + 2 H(+). Its pathway is glycan metabolism; heparan sulfate biosynthesis. The protein operates within glycan metabolism; heparin biosynthesis. With respect to regulation, inhibited by long N-sulfated sequences (more than 6 sugar residues) accumulating in its substrates heparan sulfate, and heparin. In terms of biological role, essential bifunctional enzyme that catalyzes both the N-deacetylation and the N-sulfation of glucosamine (GlcNAc) of the glycosaminoglycan in heparan sulfate. Modifies the GlcNAc-GlcA disaccharide repeating sugar backbone to make N-sulfated heparosan, a prerequisite substrate for later modifications in heparin biosynthesis. Plays a role in determining the extent and pattern of sulfation of heparan sulfate. Participates in biosynthesis of heparan sulfate that can ultimately serve as L-selectin ligands, thereby playing a role in inflammatory response. Required for the exosomal release of SDCBP, CD63 and syndecan. In Mus musculus (Mouse), this protein is Bifunctional heparan sulfate N-deacetylase/N-sulfotransferase 1.